The sequence spans 502 residues: UPF0371 protein CTC_00401 (502 aa).

It belongs to the UPF0371 family.

This Clostridium tetani (strain Massachusetts / E88) protein is UPF0371 protein CTC_00401.